Here is a 216-residue protein sequence, read N- to C-terminus: Golgi to ER traffic protein 1 (216 aa).

Topologically, residues 1 to 9 (MFDISSSNL) are lumenal. A helical membrane pass occupies residues 10 to 29 (LISVLVVLFAKQLINAVGKA). Residues 30–116 (TLENIGWSAY…YISKYIGYMI (87 aa)) lie on the Cytoplasmic side of the membrane. Positions 54–105 (LDQKNVELAKVSKERKSISAQDQYARWTKLNRQFDKLTGEINKLKEETSASR) form a coiled coil. The helical transmembrane segment at 117–137 (LVTTTLPIWFFRVWFRKAVLF) threads the bilayer. The Lumenal portion of the chain corresponds to 138 to 161 (YFPTGVLPHYLEWFLALPFITTGG). A helical membrane pass occupies residues 162–178 (VGLTIWMSAVNNVVSSV). Topologically, residues 179-216 (IFLVKFPFEKEVPFPSKEVGNEKTSINKEEVSGTPAAN) are cytoplasmic. The tract at residues 193 to 216 (PSKEVGNEKTSINKEEVSGTPAAN) is disordered. Positions 197–209 (VGNEKTSINKEEV) are enriched in basic and acidic residues.

Belongs to the WRB/GET1 family. Component of the Golgi to ER traffic (GET) complex, which is composed of GET1, GET2 and GET3. Within the complex, GET1 and GET2 form a heterotetramer which is stabilized by phosphatidylinositol binding and which binds to the GET3 homodimer.

It is found in the endoplasmic reticulum membrane. The protein localises to the golgi apparatus membrane. Its function is as follows. Required for the post-translational delivery of tail-anchored (TA) proteins to the endoplasmic reticulum. Together with GET2, acts as a membrane receptor for soluble GET3, which recognizes and selectively binds the transmembrane domain of TA proteins in the cytosol. The GET complex cooperates with the HDEL receptor ERD2 to mediate the ATP-dependent retrieval of resident ER proteins that contain a C-terminal H-D-E-L retention signal from the Golgi to the ER. The polypeptide is Golgi to ER traffic protein 1 (Debaryomyces hansenii (strain ATCC 36239 / CBS 767 / BCRC 21394 / JCM 1990 / NBRC 0083 / IGC 2968) (Yeast)).